A 218-amino-acid chain; its full sequence is Glutathione S-transferase Mu 4 (218 aa).

One can recognise a GST N-terminal domain in the interval 1–88; it reads MPMTLGYWDI…YIARKHNLCG (88 aa). Glutathione is bound by residues 7 to 8, 46 to 50, 59 to 60, and 72 to 73; these read YW, WLSEK, NL, and QS. The region spanning 90–208 is the GST C-terminal domain; that stretch reads TEEEKIRVDI…KTSRFLRTPL (119 aa). Tyr116 contributes to the substrate binding site.

This sequence belongs to the GST superfamily. Mu family. As to quaternary structure, homodimer.

The protein localises to the cytoplasm. The catalysed reaction is RX + glutathione = an S-substituted glutathione + a halide anion + H(+). It carries out the reaction 1-chloro-2,4-dinitrobenzene + glutathione = 2,4-dinitrophenyl-S-glutathione + chloride + H(+). It catalyses the reaction (13S,14S)-epoxy-(4Z,7Z,9E,11E,16Z,19Z)-docosahexaenoate + glutathione = (13R)-S-glutathionyl-(14S)-hydroxy-(4Z,7Z,9E,11E,16Z,19Z)-docosahexaenoate. The enzyme catalyses leukotriene C4 = leukotriene A4 + glutathione. Its function is as follows. Conjugation of reduced glutathione to a wide number of exogenous and endogenous hydrophobic electrophiles. Catalyzes the conjugation of leukotriene A4 with reduced glutathione (GSH) to form leukotriene C4. Can also catalyze the transfer of a glutathionyl group from glutathione (GSH) to 13(S),14(S)-epoxy-docosahexaenoic acid to form maresin conjugate in tissue regeneration 1 (MCTR1), a bioactive lipid mediator that possess potent anti-inflammatory and proresolving actions. This Rattus norvegicus (Rat) protein is Glutathione S-transferase Mu 4 (Gstm4).